The chain runs to 406 residues: Immediate early response gene 5-like protein (406 aa).

Disordered regions lie at residues 166–195 (QPPH…APAA) and 216–235 (AAPS…PSSS). Residues 182–193 (QPGPAPLPPPAP) are compositionally biased toward pro residues.

This sequence belongs to the IER family.

The sequence is that of Immediate early response gene 5-like protein (Ier5l) from Mus musculus (Mouse).